The sequence spans 401 residues: MADPKYADLPGIARNEPDVYETSDLPEDDQAEFDAEELTSTSVEHIIVNPNAAYDKFKDKRVGTKGLDFSDRIGKTKRTGYESGEYEMLGEGLGVKETPQQKYQRLLHEVQELTTEVEKIKTTVKESATEEKLTPVLLAKQLAALKQQLVASHLEKLLGPDAAINLTDPDGALAKRLLLQLEATKNSKGGSGGKTTGTPPDSSLVTYELHSRPEQDKFSQAAKVAELEKRLTELETAVRCDQDAQNPLSAGLQGACLMETVELLQAKVSALDLAVLDQVEARLQSVLGKVNEIAKHKASVEDADTQSKVHQLYETIQRWSPIASTLPELVQRLVTIKQLHEQAMQFGQLLTHLDTTQQMIANSLKDNTTLLTQVQTTMRENLATVEGNFASIDERMKKLGK.

Residues 1 to 25 form a disordered region; that stretch reads MADPKYADLPGIARNEPDVYETSDL. At Ala-2 the chain carries N-acetylalanine. The residue at position 6 (Tyr-6) is a Phosphotyrosine. The residue at position 83 (Ser-83) is a Phosphoserine. At Tyr-86 the chain carries Phosphotyrosine. The stretch at 99–132 forms a coiled coil; it reads PQQKYQRLLHEVQELTTEVEKIKTTVKESATEEK. 2 positions are modified to phosphothreonine: Thr-134 and Thr-198. Residues 214-244 adopt a coiled-coil conformation; that stretch reads EQDKFSQAAKVAELEKRLTELETAVRCDQDA. Ser-320 carries the post-translational modification Phosphoserine. Residues 379–399 adopt a coiled-coil conformation; sequence RENLATVEGNFASIDERMKKL.

The protein belongs to the dynactin subunit 2 family. Subunit of dynactin, a multiprotein complex part of a tripartite complex with dynein and a adapter, such as BICDL1, BICD2 or HOOK3. The dynactin complex is built around ACTR1A/ACTB filament and consists of an actin-related filament composed of a shoulder domain, a pointed end and a barbed end. Its length is defined by its flexible shoulder domain. The soulder is composed of 2 DCTN1 subunits, 4 DCTN2 and 2 DCTN3. The 4 DCNT2 (via N-terminus) bind the ACTR1A filament and act as molecular rulers to determine the length. The pointed end is important for binding dynein-dynactin cargo adapters and consists of 4 subunits: ACTR10, DCNT4, DCTN5 and DCTN6. The barbed end is composed of a CAPZA1:CAPZB heterodimers, which binds ACTR1A/ACTB filament and dynactin and stabilizes dynactin. Interacts with BICD2 and CEP135. Interacts with DYNAP. Interacts with ECPAS. Interacts with MAPRE1.

Its subcellular location is the cytoplasm. The protein resides in the cytoskeleton. It is found in the microtubule organizing center. It localises to the centrosome. The protein localises to the membrane. In terms of biological role, part of the dynactin complex that activates the molecular motor dynein for ultra-processive transport along microtubules. In the dynactin soulder domain, binds the ACTR1A filament and acts as a molecular ruler to determine the length. Modulates cytoplasmic dynein binding to an organelle, and plays a role in prometaphase chromosome alignment and spindle organization during mitosis. Involved in anchoring microtubules to centrosomes. May play a role in synapse formation during brain development. The protein is Dynactin subunit 2 of Homo sapiens (Human).